Reading from the N-terminus, the 99-residue chain is UPF0235 protein Sbal_3028 (99 aa).

The protein belongs to the UPF0235 family.

The protein is UPF0235 protein Sbal_3028 of Shewanella baltica (strain OS155 / ATCC BAA-1091).